The chain runs to 218 residues: MSVVVKICGLSTCDTLEAAVAAGADMVGFVFFPASPRHVGLDVARELSDQVGSRAAKVALTVDASDALIRDIVEILKPDLLQLHGSESPERVRALKQAFGLPVMKAIAVATAADLAMLPAYAETADRILFDARPPKDATRPGGLGMTFDWELLRDLDLSLPFMVSGGVNPGNVAAALRVTGAGGVDVSSGVERAPGAKDPELIRSFIRAARASEELMT.

The protein belongs to the TrpF family.

The enzyme catalyses N-(5-phospho-beta-D-ribosyl)anthranilate = 1-(2-carboxyphenylamino)-1-deoxy-D-ribulose 5-phosphate. It participates in amino-acid biosynthesis; L-tryptophan biosynthesis; L-tryptophan from chorismate: step 3/5. This Rhodopseudomonas palustris (strain BisB5) protein is N-(5'-phosphoribosyl)anthranilate isomerase.